A 638-amino-acid chain; its full sequence is Chaperone protein DnaK (638 aa).

T197 is subject to Phosphothreonine; by autocatalysis. Positions 600–638 (SGAQGGAQAGPGAGAGQQANQGSSNNKEDIQDADFEEVK) are disordered. Gly residues predominate over residues 602–614 (AQGGAQAGPGAGA). The span at 615–624 (GQQANQGSSN) shows a compositional bias: low complexity. The span at 625–638 (NKEDIQDADFEEVK) shows a compositional bias: basic and acidic residues.

The protein belongs to the heat shock protein 70 family.

Functionally, acts as a chaperone. The polypeptide is Chaperone protein DnaK (Phocaeicola vulgatus (strain ATCC 8482 / DSM 1447 / JCM 5826 / CCUG 4940 / NBRC 14291 / NCTC 11154) (Bacteroides vulgatus)).